A 318-amino-acid chain; its full sequence is L-lactate dehydrogenase (318 aa).

NAD(+) is bound by residues Val-18, Asp-39, Lys-44, Tyr-69, and 83 to 84; that span reads GA. Positions 86 and 92 each coordinate substrate. NAD(+) contacts are provided by residues Ser-105, 122 to 124, and Ser-147; that span reads VSN. 124 to 127 provides a ligand contact to substrate; it reads NPVD. Residue 152–155 coordinates substrate; sequence DTSR. His-179 serves as the catalytic Proton acceptor. Tyr-225 carries the phosphotyrosine modification. Thr-234 lines the substrate pocket.

Belongs to the LDH/MDH superfamily. LDH family. In terms of assembly, homotetramer.

It is found in the cytoplasm. It catalyses the reaction (S)-lactate + NAD(+) = pyruvate + NADH + H(+). The protein operates within fermentation; pyruvate fermentation to lactate; (S)-lactate from pyruvate: step 1/1. Its function is as follows. Catalyzes the conversion of lactate to pyruvate. In Clostridium botulinum (strain Okra / Type B1), this protein is L-lactate dehydrogenase.